The chain runs to 112 residues: UPF0482 protein Ent638_1930 (112 aa).

An N-terminal signal peptide occupies residues 1 to 27; the sequence is MTTLRKRLCLATLLSLTALAFTAPVSA.

It belongs to the UPF0482 family.

The polypeptide is UPF0482 protein Ent638_1930 (Enterobacter sp. (strain 638)).